The sequence spans 147 residues: 3-dehydroquinate dehydratase (147 aa).

The Proton acceptor role is filled by tyrosine 23. Asparagine 74, histidine 80, and aspartate 87 together coordinate substrate. Histidine 100 serves as the catalytic Proton donor. Residues 101-102 and arginine 111 each bind substrate; that span reads IS.

Belongs to the type-II 3-dehydroquinase family. In terms of assembly, homododecamer.

It catalyses the reaction 3-dehydroquinate = 3-dehydroshikimate + H2O. The protein operates within metabolic intermediate biosynthesis; chorismate biosynthesis; chorismate from D-erythrose 4-phosphate and phosphoenolpyruvate: step 3/7. In terms of biological role, catalyzes a trans-dehydration via an enolate intermediate. This Bacillus pumilus (strain SAFR-032) protein is 3-dehydroquinate dehydratase.